The sequence spans 299 residues: Acetylglutamate kinase (299 aa).

Substrate is bound by residues 72–73 (GG), arginine 94, and asparagine 196.

The protein belongs to the acetylglutamate kinase family. ArgB subfamily.

The protein resides in the cytoplasm. It carries out the reaction N-acetyl-L-glutamate + ATP = N-acetyl-L-glutamyl 5-phosphate + ADP. It participates in amino-acid biosynthesis; L-arginine biosynthesis; N(2)-acetyl-L-ornithine from L-glutamate: step 2/4. Functionally, catalyzes the ATP-dependent phosphorylation of N-acetyl-L-glutamate. The protein is Acetylglutamate kinase of Burkholderia ambifaria (strain MC40-6).